Here is a 1024-residue protein sequence, read N- to C-terminus: Importin-8 (1024 aa).

An Importin N-terminal domain is found at 22 to 102 (AENELNQSYK…RENMVEAIIR (81 aa)). Residues 896 to 969 (FGRAQGSEEE…YSTPLDCDNG (74 aa)) form a disordered region. Acidic residues-rich tracts occupy residues 902-917 (SEEE…EDEV) and 934-952 (DNED…DEGL).

This sequence belongs to the importin beta family.

It is found in the cytoplasm. Its subcellular location is the nucleus. Functionally, involved in nuclear protein import, either by acting as autonomous nuclear transport receptor or as an adapter-like protein in association with the importin-beta subunit KPNB1. Acting autonomously, may serve as receptor for nuclear localization signals (NLS) and promote translocation of import substrates through the nuclear pore complex (NPC) by an energy requiring, Ran-dependent mechanism. At the nucleoplasmic side of the NPC, Ran binds to importin, the importin/substrate complex dissociates and importin is re-exported from the nucleus to the cytoplasm where GTP hydrolysis releases Ran. The directionality of nuclear import is thought to be conferred by an asymmetric distribution of the GTP- and GDP-bound forms of Ran between the cytoplasm and nucleus. In vitro mediates the nuclear import of the signal recognition particle protein SRP19. May also be involved in cytoplasm-to-nucleus shuttling of a broad spectrum of other cargos, including Argonaute-microRNAs complexes, the JUN protein, RELA/NF-kappa-B p65 subunit, the translation initiation factor EIF4E and a set of receptor-activated mothers against decapentaplegic homolog (SMAD) transcription factors that play a critical role downstream of the large family of transforming growth factor beta and bone morphogenetic protein (BMP) cytokines. The sequence is that of Importin-8 (ipo8) from Danio rerio (Zebrafish).